A 611-amino-acid polypeptide reads, in one-letter code: Dihydroxy-acid dehydratase (611 aa).

Asp81 is a binding site for Mg(2+). Cys122 provides a ligand contact to [2Fe-2S] cluster. Residues Asp123 and Lys124 each coordinate Mg(2+). At Lys124 the chain carries N6-carboxylysine. Cys195 is a [2Fe-2S] cluster binding site. Glu491 is a binding site for Mg(2+). The Proton acceptor role is filled by Ser517.

The protein belongs to the IlvD/Edd family. Homodimer. [2Fe-2S] cluster is required as a cofactor. Mg(2+) serves as cofactor.

The catalysed reaction is (2R)-2,3-dihydroxy-3-methylbutanoate = 3-methyl-2-oxobutanoate + H2O. It catalyses the reaction (2R,3R)-2,3-dihydroxy-3-methylpentanoate = (S)-3-methyl-2-oxopentanoate + H2O. Its pathway is amino-acid biosynthesis; L-isoleucine biosynthesis; L-isoleucine from 2-oxobutanoate: step 3/4. It participates in amino-acid biosynthesis; L-valine biosynthesis; L-valine from pyruvate: step 3/4. Functionally, functions in the biosynthesis of branched-chain amino acids. Catalyzes the dehydration of (2R,3R)-2,3-dihydroxy-3-methylpentanoate (2,3-dihydroxy-3-methylvalerate) into 2-oxo-3-methylpentanoate (2-oxo-3-methylvalerate) and of (2R)-2,3-dihydroxy-3-methylbutanoate (2,3-dihydroxyisovalerate) into 2-oxo-3-methylbutanoate (2-oxoisovalerate), the penultimate precursor to L-isoleucine and L-valine, respectively. The sequence is that of Dihydroxy-acid dehydratase from Glaesserella parasuis serovar 5 (strain SH0165) (Haemophilus parasuis).